A 167-amino-acid chain; its full sequence is Translation initiation factor IF-3 (167 aa).

The protein belongs to the IF-3 family. Monomer.

It localises to the cytoplasm. IF-3 binds to the 30S ribosomal subunit and shifts the equilibrium between 70S ribosomes and their 50S and 30S subunits in favor of the free subunits, thus enhancing the availability of 30S subunits on which protein synthesis initiation begins. In Bacillus anthracis, this protein is Translation initiation factor IF-3.